We begin with the raw amino-acid sequence, 285 residues long: Cyclin-Y-like protein 1B (285 aa).

Residues 111–209 (PKRNCIFRHF…CFLELLEFNI (99 aa)) enclose the Cyclin N-terminal domain.

This sequence belongs to the cyclin family. Cyclin Y subfamily.

The protein is Cyclin-Y-like protein 1B of Homo sapiens (Human).